Reading from the N-terminus, the 158-residue chain is Ribonuclease H (158 aa).

In terms of domain architecture, RNase H type-1 spans 2–143; that stretch reads PEKIIELFTD…VDALLNRVMD (142 aa). Mg(2+) contacts are provided by Asp-11, Glu-49, Asp-71, and Asp-135.

It belongs to the RNase H family. Monomer. Mg(2+) is required as a cofactor.

It localises to the cytoplasm. It carries out the reaction Endonucleolytic cleavage to 5'-phosphomonoester.. Functionally, endonuclease that specifically degrades the RNA of RNA-DNA hybrids. The sequence is that of Ribonuclease H from Acidithiobacillus ferrooxidans (strain ATCC 23270 / DSM 14882 / CIP 104768 / NCIMB 8455) (Ferrobacillus ferrooxidans (strain ATCC 23270)).